The following is a 330-amino-acid chain: ADP-L-glycero-D-manno-heptose-6-epimerase (330 aa).

Residues 11 to 12, 32 to 33, Lys-39, Lys-54, 75 to 79, and Asn-92 each bind NADP(+); these read FI, DN, and EGACS. Tyr-139 serves as the catalytic Proton acceptor. Lys-143 lines the NADP(+) pocket. Substrate is bound at residue Asn-168. Positions 169 and 177 each coordinate NADP(+). The active-site Proton acceptor is the Lys-177. Residues Arg-179, His-186, 200-203, Arg-213, and Tyr-292 each bind substrate; that span reads FGEY.

Belongs to the NAD(P)-dependent epimerase/dehydratase family. HldD subfamily. As to quaternary structure, homopentamer. The cofactor is NADP(+).

It carries out the reaction ADP-D-glycero-beta-D-manno-heptose = ADP-L-glycero-beta-D-manno-heptose. It functions in the pathway nucleotide-sugar biosynthesis; ADP-L-glycero-beta-D-manno-heptose biosynthesis; ADP-L-glycero-beta-D-manno-heptose from D-glycero-beta-D-manno-heptose 7-phosphate: step 4/4. In terms of biological role, catalyzes the interconversion between ADP-D-glycero-beta-D-manno-heptose and ADP-L-glycero-beta-D-manno-heptose via an epimerization at carbon 6 of the heptose. The chain is ADP-L-glycero-D-manno-heptose-6-epimerase from Burkholderia cenocepacia (strain HI2424).